A 440-amino-acid chain; its full sequence is Xylose isomerase (440 aa).

Residues His100 and Asp103 contribute to the active site. Glu231, Glu267, His270, Asp295, Asp306, Asp308, and Asp338 together coordinate Mg(2+).

The protein belongs to the xylose isomerase family. Homotetramer. It depends on Mg(2+) as a cofactor.

The protein localises to the cytoplasm. The catalysed reaction is alpha-D-xylose = alpha-D-xylulofuranose. The protein is Xylose isomerase of Burkholderia cenocepacia (strain ATCC BAA-245 / DSM 16553 / LMG 16656 / NCTC 13227 / J2315 / CF5610) (Burkholderia cepacia (strain J2315)).